A 424-amino-acid polypeptide reads, in one-letter code: Deoxyguanosinetriphosphate triphosphohydrolase-like protein (424 aa).

Positions 1–10 (MEGTAPPTPY) are enriched in pro residues. Residues 1–31 (MEGTAPPTPYDPASVARYAPEPDKRPGRTAF) are disordered. Basic and acidic residues predominate over residues 20-31 (PEPDKRPGRTAF). Positions 70–220 (RLTHSLECAQ…MDWADDVAYS (151 aa)) constitute an HD domain.

The protein belongs to the dGTPase family. Type 2 subfamily.

In Streptomyces coelicolor (strain ATCC BAA-471 / A3(2) / M145), this protein is Deoxyguanosinetriphosphate triphosphohydrolase-like protein.